The sequence spans 85 residues: Large ribosomal subunit protein bL31B (85 aa).

It belongs to the bacterial ribosomal protein bL31 family. Type B subfamily. Part of the 50S ribosomal subunit.

This is Large ribosomal subunit protein bL31B from Clavibacter michiganensis subsp. michiganensis (strain NCPPB 382).